A 460-amino-acid chain; its full sequence is Light-independent protochlorophyllide reductase subunit N (460 aa).

[4Fe-4S] cluster-binding residues include cysteine 20, cysteine 45, and cysteine 105.

This sequence belongs to the BchN/ChlN family. In terms of assembly, protochlorophyllide reductase is composed of three subunits; ChlL, ChlN and ChlB. Forms a heterotetramer of two ChlB and two ChlN subunits. It depends on [4Fe-4S] cluster as a cofactor.

The protein localises to the plastid. It localises to the chloroplast. The catalysed reaction is chlorophyllide a + oxidized 2[4Fe-4S]-[ferredoxin] + 2 ADP + 2 phosphate = protochlorophyllide a + reduced 2[4Fe-4S]-[ferredoxin] + 2 ATP + 2 H2O. Its pathway is porphyrin-containing compound metabolism; chlorophyll biosynthesis (light-independent). Component of the dark-operative protochlorophyllide reductase (DPOR) that uses Mg-ATP and reduced ferredoxin to reduce ring D of protochlorophyllide (Pchlide) to form chlorophyllide a (Chlide). This reaction is light-independent. The NB-protein (ChlN-ChlB) is the catalytic component of the complex. The chain is Light-independent protochlorophyllide reductase subunit N from Adiantum capillus-veneris (Maidenhair fern).